Consider the following 119-residue polypeptide: Large ribosomal subunit protein bL19 (119 aa).

This sequence belongs to the bacterial ribosomal protein bL19 family.

In terms of biological role, this protein is located at the 30S-50S ribosomal subunit interface and may play a role in the structure and function of the aminoacyl-tRNA binding site. This is Large ribosomal subunit protein bL19 from Limosilactobacillus reuteri (strain DSM 20016) (Lactobacillus reuteri).